The sequence spans 397 residues: Teichoic acid D-alanine hydrolase (397 aa).

The first 23 residues, 1-23, serve as a signal peptide directing secretion; that stretch reads MKFNKVKLVIHACVLLFIIISIA.

It localises to the cell membrane. It carries out the reaction [(4-D-Ala)-(2-GlcNAc)-Rib-ol-P]n-[Gro-P]m-beta-D-ManNAc-(1-&gt;4)-alpha-D-GlcNAc-P-peptidoglycan + n H2O = [(2-GlcNAc)-Rib-ol-P]n-[Gro-P]m-beta-D-ManNAc-(1-&gt;4)-alpha-D-GlcNAc-P-peptidoglycan + n D-alanine.. Catalyzes the liberation of D-alanyl moieties present on wall teichoic acid (WTA) and lipoteichoic acid (LTA). Affects the methicillin resistance level and autolysis in the presence of Triton X-100 as well as the cell wall structure. This chain is Teichoic acid D-alanine hydrolase (fmtA), found in Staphylococcus aureus (strain Mu50 / ATCC 700699).